A 314-amino-acid chain; its full sequence is L-lactate dehydrogenase (314 aa).

Residues Val16, Asp37, Lys42, Tyr68, and Gly82–Val83 each bind NAD(+). Positions 85 and 91 each coordinate substrate. Residues Ser104, Ala121–Asn123, and Thr146 each bind NAD(+). Asn123 to Asp126 lines the substrate pocket. A substrate-binding site is contributed by Asp151 to Arg154. Beta-D-fructose 1,6-bisphosphate-binding residues include Arg156 and His171. His178 acts as the Proton acceptor in catalysis. Tyr223 carries the post-translational modification Phosphotyrosine. Thr232 contacts substrate.

Belongs to the LDH/MDH superfamily. LDH family. In terms of assembly, homotetramer.

It is found in the cytoplasm. It catalyses the reaction (S)-lactate + NAD(+) = pyruvate + NADH + H(+). Its pathway is fermentation; pyruvate fermentation to lactate; (S)-lactate from pyruvate: step 1/1. Its activity is regulated as follows. Allosterically activated by fructose 1,6-bisphosphate (FBP). Catalyzes the conversion of lactate to pyruvate. This Lactococcus lactis subsp. cremoris (strain MG1363) protein is L-lactate dehydrogenase.